The chain runs to 542 residues: ATP synthase subunit beta (542 aa).

Residues M1 to P50 show a composition bias toward low complexity. The segment at M1–P61 is disordered. Residue G216–T223 participates in ATP binding.

This sequence belongs to the ATPase alpha/beta chains family. As to quaternary structure, F-type ATPases have 2 components, CF(1) - the catalytic core - and CF(0) - the membrane proton channel. CF(1) has five subunits: alpha(3), beta(3), gamma(1), delta(1), epsilon(1). CF(0) has three main subunits: a(1), b(2) and c(9-12). The alpha and beta chains form an alternating ring which encloses part of the gamma chain. CF(1) is attached to CF(0) by a central stalk formed by the gamma and epsilon chains, while a peripheral stalk is formed by the delta and b chains.

It is found in the cell inner membrane. It carries out the reaction ATP + H2O + 4 H(+)(in) = ADP + phosphate + 5 H(+)(out). Its function is as follows. Produces ATP from ADP in the presence of a proton gradient across the membrane. The catalytic sites are hosted primarily by the beta subunits. This chain is ATP synthase subunit beta, found in Caulobacter sp. (strain K31).